A 910-amino-acid chain; its full sequence is DNA mismatch repair protein MutS (910 aa).

Positions 1-11 (MEAKVEEKEPE) are enriched in basic and acidic residues. The interval 1-21 (MEAKVEEKEPEPVENAGPDAP) is disordered. Residue 658–665 (GPNMGGKS) coordinates ATP.

This sequence belongs to the DNA mismatch repair MutS family.

In terms of biological role, this protein is involved in the repair of mismatches in DNA. It is possible that it carries out the mismatch recognition step. This protein has a weak ATPase activity. The protein is DNA mismatch repair protein MutS of Brucella canis (strain ATCC 23365 / NCTC 10854 / RM-666).